The chain runs to 239 residues: Lipoprotein-releasing system ATP-binding protein LolD (239 aa).

Residues 9 to 239 form the ABC transporter domain; sequence LQVQHVSKHY…AATSPTGLAE (231 aa). Residue 45–52 coordinates ATP; the sequence is GSSGSGKS.

It belongs to the ABC transporter superfamily. Lipoprotein translocase (TC 3.A.1.125) family. In terms of assembly, the complex is composed of two ATP-binding proteins (LolD) and two transmembrane proteins (LolC and LolE).

The protein resides in the cell inner membrane. In terms of biological role, part of the ABC transporter complex LolCDE involved in the translocation of mature outer membrane-directed lipoproteins, from the inner membrane to the periplasmic chaperone, LolA. Responsible for the formation of the LolA-lipoprotein complex in an ATP-dependent manner. The protein is Lipoprotein-releasing system ATP-binding protein LolD of Shewanella frigidimarina (strain NCIMB 400).